The sequence spans 320 residues: 4-hydroxyproline 2-epimerase (320 aa).

Cys-98 serves as the catalytic Proton acceptor. Residues 99-100 (GH), His-218, and Asp-242 contribute to the substrate site. Cys-246 acts as the Proton donor in catalysis. 247–248 (GT) is a substrate binding site.

This sequence belongs to the proline racemase family.

The catalysed reaction is trans-4-hydroxy-L-proline = cis-4-hydroxy-D-proline. In terms of biological role, catalyzes the epimerization of trans-4-hydroxy-L-proline (t4LHyp) to cis-4-hydroxy-D-proline (c4DHyp). Is likely involved in a degradation pathway that converts t4LHyp to alpha-ketoglutarate. Displays no proline racemase activity. In Burkholderia pseudomallei (strain 1710b), this protein is 4-hydroxyproline 2-epimerase.